Here is a 531-residue protein sequence, read N- to C-terminus: Maturase K (531 aa).

This sequence belongs to the intron maturase 2 family. MatK subfamily.

Its subcellular location is the plastid. It localises to the chloroplast. Functionally, usually encoded in the trnK tRNA gene intron. Probably assists in splicing its own and other chloroplast group II introns. The sequence is that of Maturase K from Ephedra sinica (Chinese ephedra).